The following is a 203-amino-acid chain: Small ribosomal subunit protein uS4 (203 aa).

One can recognise an S4 RNA-binding domain in the interval 93-156 (RRLDNVVYRL…MKVPAILEAV (64 aa)).

The protein belongs to the universal ribosomal protein uS4 family. In terms of assembly, part of the 30S ribosomal subunit. Contacts protein S5. The interaction surface between S4 and S5 is involved in control of translational fidelity.

In terms of biological role, one of the primary rRNA binding proteins, it binds directly to 16S rRNA where it nucleates assembly of the body of the 30S subunit. Functionally, with S5 and S12 plays an important role in translational accuracy. The chain is Small ribosomal subunit protein uS4 from Streptococcus pyogenes serotype M49 (strain NZ131).